A 315-amino-acid chain; its full sequence is Probable cell division protein WhiA (315 aa).

The segment at residues 277 to 311 is a DNA-binding region (H-T-H motif); sequence SLQELGAMMPSGQISKSGVNHRLRKLNQIAEGYQQ.

The protein belongs to the WhiA family.

Its function is as follows. Involved in cell division and chromosome segregation. This Lacticaseibacillus casei (strain BL23) (Lactobacillus casei) protein is Probable cell division protein WhiA.